The primary structure comprises 124 residues: Riboflavin kinase (124 aa).

10–15 (GLGKAA) serves as a coordination point for CDP. Mg(2+) is bound by residues Thr39 and Asn41. Residues Thr93 and Glu101 each contribute to the FMN site. Residue 106–109 (DKLR) coordinates CDP.

Belongs to the archaeal riboflavin kinase family. It depends on Mg(2+) as a cofactor.

The enzyme catalyses riboflavin + CTP = CDP + FMN + H(+). It participates in cofactor biosynthesis; FMN biosynthesis; FMN from riboflavin (CTP route): step 1/1. In terms of biological role, catalyzes the CTP-dependent phosphorylation of riboflavin (vitamin B2) to form flavin mononucleotide (FMN). This chain is Riboflavin kinase, found in Methanobrevibacter smithii (strain ATCC 35061 / DSM 861 / OCM 144 / PS).